The primary structure comprises 413 residues: Eukaryotic initiation factor 4A-11 (413 aa).

The Q motif signature appears at 40-68; the sequence is ESFDAMGLQENLLRGIYAYGFEKPSAIQQ. The Helicase ATP-binding domain occupies 71–241; the sequence is IVPFCKGLDV…RKFMNKPVRI (171 aa). 84–91 is a binding site for ATP; sequence AQSGTGKT. The DEAD box signature appears at 189-192; that stretch reads DEAD. Residues 252 to 413 form the Helicase C-terminal domain; the sequence is GIKQFYVNVD…ELPANVADLL (162 aa).

The protein belongs to the DEAD box helicase family. eIF4A subfamily. EIF4F is a multi-subunit complex, the composition of which varies with external and internal environmental conditions. It is composed of at least EIF4A, EIF4E and EIF4G.

The enzyme catalyses ATP + H2O = ADP + phosphate + H(+). Its function is as follows. ATP-dependent RNA helicase which is a subunit of the eIF4F complex involved in cap recognition and is required for mRNA binding to ribosome. In the current model of translation initiation, eIF4A unwinds RNA secondary structures in the 5'-UTR of mRNAs which is necessary to allow efficient binding of the small ribosomal subunit, and subsequent scanning for the initiator codon. The chain is Eukaryotic initiation factor 4A-11 from Nicotiana tabacum (Common tobacco).